A 332-amino-acid polypeptide reads, in one-letter code: MDPRSEVLLRQAELFQGPLLIAGAPADDLLGQLPQAQAWTWHAGDQAMLDSRFAGRSHYAVEPPDLPFDSAVLFLPKSRELAAYLLNALASRLAGRELYLVGEKRGGIEGAAKQLQAFGKPRKLDSARHCQLWQVTIDQAPQAKPLESLAERFELALEDGPLQVVSLPGVFSHGRLDRGTALLLKHLDGLPDGHMLDFGCGAGVLGATLKRRYPQSRVTMLDVDAFAVAASRLTLAANGLEGDVISGDGIDAAPTELSLILSNPPFHTGVHTNYQASENLLKKSAVHLRKGGEMRLVANSFLRYQPLIEGALGNCQVRDEADGFRIYQATHG.

It belongs to the methyltransferase superfamily. RsmC family. Monomer.

The protein resides in the cytoplasm. The enzyme catalyses guanosine(1207) in 16S rRNA + S-adenosyl-L-methionine = N(2)-methylguanosine(1207) in 16S rRNA + S-adenosyl-L-homocysteine + H(+). Its function is as follows. Specifically methylates the guanine in position 1207 of 16S rRNA in the 30S particle. The protein is Ribosomal RNA small subunit methyltransferase C of Pseudomonas putida (strain GB-1).